The sequence spans 614 residues: Leucine-rich repeat and immunoglobulin-like domain-containing nogo receptor-interacting protein 1 (614 aa).

Residues 1-35 form the signal peptide; the sequence is MLAGGVRSMPSPLLACWQPILLLVLGSVLSGSATG. Intrachain disulfides connect cysteine 36/cysteine 42 and cysteine 40/cysteine 51. Positions 36–65 constitute an LRRNT domain; sequence CPPRCECSAQDRAVLCHRKRFVAVPEGIPT. The Extracellular segment spans residues 36 to 555; it reads CPPRCECSAQ…FDIKTLIIAT (520 aa). 11 LRR repeats span residues 66 to 87, 90 to 111, 114 to 135, 138 to 159, 162 to 183, 186 to 207, 210 to 231, 258 to 279, 282 to 303, 306 to 327, and 330 to 351; these read ETRL…EFAS, HLEE…AFNN, NLRT…VFTG, NLTK…MFQD, NLKS…AFSG, SLEQ…ALSH, GLIV…SFKR, NLTS…AVRH, YLRF…MLHE, RLQE…AFRG, and YLRV…VFHS. An N-linked (GlcNAc...) asparagine glycan is attached at asparagine 138. Asparagine 196 carries an N-linked (GlcNAc...) asparagine glycan. N-linked (GlcNAc...) asparagine glycans are attached at residues asparagine 258, asparagine 268, and asparagine 287. The N-linked (GlcNAc...) asparagine glycan is linked to asparagine 335. Residues 363–417 form the LRRCT domain; that stretch reads NPLACDCRLLWVFRRRWRLNFNRQQPTCATPEFVQGKEFKDFPDVLLPNYFTCRR. 3 cysteine pairs are disulfide-bonded: cysteine 367–cysteine 390, cysteine 369–cysteine 415, and cysteine 440–cysteine 491. Positions 405–507 constitute an Ig-like C2-type domain; sequence PDVLLPNYFT…GNDSMPAHLH (103 aa). 2 N-linked (GlcNAc...) asparagine glycosylation sites follow: asparagine 486 and asparagine 536. A helical membrane pass occupies residues 556-576; the sequence is TMGFISFLGVVLFCLVLLFLW. Over 577-614 the chain is Cytoplasmic; sequence SRGKGNTKHNIEIEYVPRKSDAGISSADAPRKFNMKMI. A Phosphoserine modification is found at serine 596.

Homotetramer. Forms a ternary complex with RTN4R/NGFR and RTN4R/TNFRSF19. Interacts with NGRF, RTN4R and MYT1L. Post-translationally, N-glycosylated. Contains predominantly high-mannose glycans.

The protein localises to the cell membrane. Its function is as follows. Functional component of the Nogo receptor signaling complex (RTN4R/NGFR) in RhoA activation responsible for some inhibition of axonal regeneration by myelin-associated factors. Is also an important negative regulator of oligodentrocyte differentiation and axonal myelination. Acts in conjunction with RTN4 and RTN4R in regulating neuronal precursor cell motility during cortical development. The polypeptide is Leucine-rich repeat and immunoglobulin-like domain-containing nogo receptor-interacting protein 1 (LINGO1) (Macaca fascicularis (Crab-eating macaque)).